A 471-amino-acid chain; its full sequence is Ubiquitin carboxyl-terminal hydrolase calypso (471 aa).

In terms of domain architecture, UCH catalytic spans 45–276; sequence GWLELESDPG…IRFNLMAVVP (232 aa). C131 serves as the catalytic Nucleophile. Residue H213 is the Proton donor of the active site. The disordered stretch occupies residues 307 to 326; the sequence is DEQGESGNGDSQRPDTPTTL. The segment covering 314-326 has biased composition (polar residues); that stretch reads NGDSQRPDTPTTL. Residues 375-403 form the ULD domain; sequence NYDKFICTFLSMLAHQGVLGELVSQHLLP. A positively charged C-terminal tail required for binding nucleosomes region spans residues 405-471; the sequence is KKVSGQGAAN…KGRNKCRKRK (67 aa). The disordered stretch occupies residues 412-471; sequence AANRISKQSNTASAGGSTTGASASTPKTQQQQAAAAKNGKSPSKTPGRRRKGRNKCRKRK. The span at 422–447 shows a compositional bias: low complexity; sequence TASAGGSTTGASASTPKTQQQQAAAA. The segment covering 457-471 has biased composition (basic residues); the sequence is PGRRRKGRNKCRKRK.

The protein belongs to the peptidase C12 family. BAP1 subfamily. In terms of assembly, catalytic component of the polycomb repressive deubiquitinase (PR-DUB) complex, at least composed of caly/calypso, Asx and sba (MBD5/6 homolog). The PR-DUB complex associates with nucleosomes to mediate deubiquitination of histone H2AK118ub1 substrates; the association requires the positively charged C-terminal tail of caly, probably due to direct binding of DNA. Interacts (via ULD domain) with Asx (via DEUBAD domain); the interaction produces a stable heterodimer with a composite binding site for ubiquitin. Homodimerizes (via coiled-coil hinge-region between the UCH and ULD domains) to mediate assembly of 2 copies of the caly-Asx heterodimer into a bisymmetric tetramer; dimerization enhances PR-DUB association with nucleosomes.

Its subcellular location is the nucleus. The catalysed reaction is Thiol-dependent hydrolysis of ester, thioester, amide, peptide and isopeptide bonds formed by the C-terminal Gly of ubiquitin (a 76-residue protein attached to proteins as an intracellular targeting signal).. Catalytic component of the polycomb repressive deubiquitinase (PR-DUB) complex, a complex that specifically mediates deubiquitination of histone H2A monoubiquitinated at 'Lys-119' (H2AK118ub1). Mediates bisymmetric organization of the PR-DUB complex and is involved in association with nucleosomes to mediate deubiquitination. Does not deubiquitinate monoubiquitinated histone H2B. Required to maintain the transcriptionally repressive state of homeotic genes throughout development. The PR-DUB complex has weak or no activity toward 'Lys-48'- and 'Lys-63'-linked polyubiquitin chains. Polycomb group (PcG) protein. The sequence is that of Ubiquitin carboxyl-terminal hydrolase calypso from Drosophila sechellia (Fruit fly).